Consider the following 180-residue polypeptide: Nucleoside triphosphate/diphosphate phosphatase (180 aa).

Catalysis depends on Arg26, which acts as the Proton donor. The Mg(2+) site is built by Asn90, Asp106, Asp108, Asp110, Asp123, and Glu126.

This sequence belongs to the Ntdp family. Mg(2+) serves as cofactor.

It catalyses the reaction a ribonucleoside 5'-triphosphate + H2O = a ribonucleoside 5'-diphosphate + phosphate + H(+). The catalysed reaction is a ribonucleoside 5'-diphosphate + H2O = a ribonucleoside 5'-phosphate + phosphate + H(+). Its function is as follows. Has nucleoside phosphatase activity towards nucleoside triphosphates and nucleoside diphosphates. The polypeptide is Nucleoside triphosphate/diphosphate phosphatase (Staphylococcus epidermidis (strain ATCC 35984 / DSM 28319 / BCRC 17069 / CCUG 31568 / BM 3577 / RP62A)).